The primary structure comprises 520 residues: Cytochrome P450 72A397 (520 aa).

The helical transmembrane segment at alanine 14–valine 34 threads the bilayer. Position 468 (cysteine 468) interacts with heme.

It belongs to the cytochrome P450 family. Heme serves as cofactor.

The protein resides in the membrane. The enzyme catalyses oleanolate + reduced [NADPH--hemoprotein reductase] + O2 = hederagenin + oxidized [NADPH--hemoprotein reductase] + H2O + H(+). Its function is as follows. Catalyzes the oxidation of oleanolate at the C-23 position to form hederagenin. The chain is Cytochrome P450 72A397 from Kalopanax septemlobus (Castor aralia).